The following is a 360-amino-acid chain: UDP-N-acetylglucosamine--N-acetylmuramyl-(pentapeptide) pyrophosphoryl-undecaprenol N-acetylglucosamine transferase (360 aa).

Residues 13-15, Asn-125, Arg-164, Ser-191, and Gln-290 each bind UDP-N-acetyl-alpha-D-glucosamine; that span reads TGG.

The protein belongs to the glycosyltransferase 28 family. MurG subfamily.

The protein localises to the cell inner membrane. It carries out the reaction di-trans,octa-cis-undecaprenyl diphospho-N-acetyl-alpha-D-muramoyl-L-alanyl-D-glutamyl-meso-2,6-diaminopimeloyl-D-alanyl-D-alanine + UDP-N-acetyl-alpha-D-glucosamine = di-trans,octa-cis-undecaprenyl diphospho-[N-acetyl-alpha-D-glucosaminyl-(1-&gt;4)]-N-acetyl-alpha-D-muramoyl-L-alanyl-D-glutamyl-meso-2,6-diaminopimeloyl-D-alanyl-D-alanine + UDP + H(+). It participates in cell wall biogenesis; peptidoglycan biosynthesis. Its function is as follows. Cell wall formation. Catalyzes the transfer of a GlcNAc subunit on undecaprenyl-pyrophosphoryl-MurNAc-pentapeptide (lipid intermediate I) to form undecaprenyl-pyrophosphoryl-MurNAc-(pentapeptide)GlcNAc (lipid intermediate II). The protein is UDP-N-acetylglucosamine--N-acetylmuramyl-(pentapeptide) pyrophosphoryl-undecaprenol N-acetylglucosamine transferase of Hahella chejuensis (strain KCTC 2396).